We begin with the raw amino-acid sequence, 433 residues long: Sulfhydrylase FUB7 (433 aa).

Position 211 is an N6-(pyridoxal phosphate)lysine (K211).

This sequence belongs to the trans-sulfuration enzymes family. It depends on pyridoxal 5'-phosphate as a cofactor.

The protein operates within mycotoxin biosynthesis. Functionally, sulfhydrylase; part of the gene cluster that mediates the biosynthesis of fusaric acid, a mycotoxin with low to moderate toxicity to animals and humans, but with high phytotoxic properties. L-aspartate is suggested as fusaric acid amino acid precursor that is activated and further processed to O-acetyl-L-homoserine by cluster enzymes aspartate kinase FUB3 and homoserine O-acetyltransferase FUB5, as well as enzymes of the primary metabolism. The polyketide synthase (PKS) FUB1 generates the triketide trans-2-hexenal which is presumptively released by the hydrolase FUB4 and linked to the NRPS-bound amino acid precursor by NAD(P)-dependent dehydrogenase FUB6. FUB1, FUB4, and the non-canonical NRPS Fub8 may form an enzyme complex. Further processing of the NRPS-bound intermediate might be carried out by FUB6 and the O-acetylhomoserine FUB7, enabling a spontaneous electrocyclization to close the carbon backbone of fusaric acid. Dihydrofusaric acid is likely to be released via reduction by the thioester reductase (TR) domain of FUB8 whereupon the final oxidation to fusaric acid may (also) be performed by the FMN-dependent dehydrogenase FUB9. The protein is Sulfhydrylase FUB7 of Gibberella moniliformis (strain M3125 / FGSC 7600) (Maize ear and stalk rot fungus).